A 207-amino-acid polypeptide reads, in one-letter code: LysM and putative peptidoglycan-binding domain-containing protein 2 (207 aa).

The LysM domain occupies 61–105 (IEHRLSPSDTLQGIALKYGVTMEQIKRANKLFSTDCIFLRKSLNI). Positions 186–207 (AQRLKEEDLRHDDSYATCSYQH) are disordered. Over residues 188 to 199 (RLKEEDLRHDDS) the composition is skewed to basic and acidic residues.

This Xenopus tropicalis (Western clawed frog) protein is LysM and putative peptidoglycan-binding domain-containing protein 2 (lysmd2).